The sequence spans 457 residues: Variant surface glycoprotein 20 (457 aa).

Residues 1-20 (MFTQAVIALIGLVSIRTGKT) form the signal peptide. The span at 385 to 397 (RQTASGDDQSAEN) shows a compositional bias: polar residues. The interval 385-406 (RQTASGDDQSAENQCGGKKEDE) is disordered. N-linked (GlcNAc...) asparagine glycosylation occurs at N436. A lipid anchor (GPI-anchor amidated serine) is attached at S440. A propeptide spans 441-457 (NSFVIKKAPLWLAFLLF) (removed in mature form).

The protein localises to the cell membrane. In terms of biological role, VSG forms a coat on the surface of the parasite. The trypanosome evades the immune response of the host by expressing a series of antigenically distinct VSGs from an estimated 1000 VSG genes. In Trypanosoma equiperdum, this protein is Variant surface glycoprotein 20.